The sequence spans 90 residues: Acylphosphatase (90 aa).

The Acylphosphatase-like domain occupies 5–90 (CVKASVKGIV…WRHIDGFEIK (86 aa)). Active-site residues include Arg20 and Asn38.

Belongs to the acylphosphatase family.

It catalyses the reaction an acyl phosphate + H2O = a carboxylate + phosphate + H(+). The polypeptide is Acylphosphatase (acyP) (Photobacterium profundum (strain SS9)).